Consider the following 711-residue polypeptide: Polyribonucleotide nucleotidyltransferase (711 aa).

Residues Asp-486 and Asp-492 each coordinate Mg(2+). A KH domain is found at 553 to 612; it reads PRIHTIKINPDKIKDVIGKGGSVIRALTEETGTTIEIEDDGTVKIAATDGEKAKHAIRRI. The 69-residue stretch at 622–690 folds into the S1 motif domain; it reads GRIYNGKVTR…RQGRVRLSIK (69 aa). Residues 690 to 711 are disordered; that stretch reads KEATEQSQPAAAPEAPAAEQGE. Low complexity predominate over residues 694 to 711; that stretch reads EQSQPAAAPEAPAAEQGE.

This sequence belongs to the polyribonucleotide nucleotidyltransferase family. Component of the RNA degradosome, which is a multiprotein complex involved in RNA processing and mRNA degradation. Requires Mg(2+) as cofactor.

Its subcellular location is the cytoplasm. The catalysed reaction is RNA(n+1) + phosphate = RNA(n) + a ribonucleoside 5'-diphosphate. Functionally, involved in mRNA degradation. Catalyzes the phosphorolysis of single-stranded polyribonucleotides processively in the 3'- to 5'-direction. The chain is Polyribonucleotide nucleotidyltransferase from Citrobacter koseri (strain ATCC BAA-895 / CDC 4225-83 / SGSC4696).